We begin with the raw amino-acid sequence, 811 residues long: Receptor-like protein 52 (811 aa).

The first 22 residues, 1-22 (MTFLPLLFIFFFLTSIPFPAFS), serve as a signal peptide directing secretion. Topologically, residues 23–770 (QYNDRSTLLN…EDEEEVMNWT (748 aa)) are extracellular. Asparagine 47, asparagine 64, asparagine 74, asparagine 93, asparagine 109, and asparagine 124 each carry an N-linked (GlcNAc...) asparagine glycan. LRR repeat units follow at residues 62–86 (AGNV…ICNF), 87–110 (PNLK…LYNC), 112–134 (KLQY…INRL), 135–159 (APKL…IGRI), 161–183 (KLKV…IGDL), and 184–208 (SELE…EFGK). Residues 211 to 233 (KLKYMWLEEMNLIGEISAVVFEN) form an LRR 7; degenerate repeat. Asparagine 233, asparagine 246, asparagine 260, asparagine 295, and asparagine 304 each carry an N-linked (GlcNAc...) asparagine glycan. 8 LRR repeats span residues 234 to 258 (MTDL…LFGL), 260 to 281 (NLTE…SISA), 282 to 305 (KNLV…IGNL), 307 to 329 (NLEL…IGKL), 330 to 354 (PELK…GFIS), 356 to 377 (LERF…LCHG), 379 to 401 (KLQS…LGDC), and 403 to 427 (TLSS…TRSN). 6 N-linked (GlcNAc...) asparagine glycosylation sites follow: asparagine 389, asparagine 422, asparagine 429, asparagine 455, asparagine 464, and asparagine 485. 10 LRR repeats span residues 441-465 (LHSL…IANL), 466-489 (STLE…ISTS), 491-511 (KSID…LVRI), 512-537 (SSLE…SMQQ), 539-557 (QVLV…QNGF), 558-581 (SKLR…FFVN), 625-649 (LNTF…VGLL), 650-673 (KELH…MGNL), 674-697 (IELE…LGKL), and 699-722 (YLAY…QFQT). N-linked (GlcNAc...) asparagine glycosylation is present at asparagine 525. Asparagine 571 and asparagine 581 each carry an N-linked (GlcNAc...) asparagine glycan. Asparagine 656 carries N-linked (GlcNAc...) asparagine glycosylation. N-linked (GlcNAc...) asparagine glycosylation is present at asparagine 704. The chain crosses the membrane as a helical span at residues 771 to 791 (AAAIGSIPGISIGLTMGYILV). Topologically, residues 792–811 (SYKPEWLMNSGRNKRRIKPI) are cytoplasmic.

It belongs to the RLP family.

It localises to the cell membrane. Required for defense against powdery mildew pathogen. This chain is Receptor-like protein 52, found in Arabidopsis thaliana (Mouse-ear cress).